The following is a 342-amino-acid chain: MTIQEELEAIKQQFSCDVSLAHSSKDLFDVKVKYLGKKGIFRGFADQLRKCPIEQKATVGASINACKQYVEEVLLERGKAVLAKEEAEEFLKEKIDISLPGSEEAALGGKHVIKKVLDDVVDIFVRFGFCVREAPNIESEKNNFSLLNFEGDHPARQMQDTFYLDPTTVLRTHTSNVQSRELARNKPPVRIVAPGECFRNEDVSARSHVIFHQVEAFCVDKDISFSDLTSMLAGFYHIFFGRKVELRFRHSYFPFVEPGIEVDISCECHGAGCSLCKHSGWLEVAGAGMIHPNVLRKASIDPEEYSGYALGMGIERLAMLKYGISDIRLFSENDLRFLRQFS.

E257 serves as a coordination point for Mg(2+).

This sequence belongs to the class-II aminoacyl-tRNA synthetase family. Phe-tRNA synthetase alpha subunit type 1 subfamily. As to quaternary structure, tetramer of two alpha and two beta subunits. The cofactor is Mg(2+).

The protein resides in the cytoplasm. It carries out the reaction tRNA(Phe) + L-phenylalanine + ATP = L-phenylalanyl-tRNA(Phe) + AMP + diphosphate + H(+). This chain is Phenylalanine--tRNA ligase alpha subunit, found in Chlamydia trachomatis serovar A (strain ATCC VR-571B / DSM 19440 / HAR-13).